The sequence spans 475 residues: Putative poly(A) polymerase catalytic subunit (475 aa).

It belongs to the poxviridae poly(A) polymerase catalytic subunit family. Highly divergent.

It is found in the virion. It catalyses the reaction RNA(n) + ATP = RNA(n)-3'-adenine ribonucleotide + diphosphate. Polymerase that creates the 3'-poly(A) tail of mRNA's. The polypeptide is Putative poly(A) polymerase catalytic subunit (African swine fever virus (isolate Tick/South Africa/Pretoriuskop Pr4/1996) (ASFV)).